A 360-amino-acid chain; its full sequence is Histidinol-phosphate aminotransferase (360 aa).

The residue at position 224 (Lys224) is an N6-(pyridoxal phosphate)lysine.

Belongs to the class-II pyridoxal-phosphate-dependent aminotransferase family. Histidinol-phosphate aminotransferase subfamily. Pyridoxal 5'-phosphate is required as a cofactor.

The enzyme catalyses L-histidinol phosphate + 2-oxoglutarate = 3-(imidazol-4-yl)-2-oxopropyl phosphate + L-glutamate. It participates in amino-acid biosynthesis; L-histidine biosynthesis; L-histidine from 5-phospho-alpha-D-ribose 1-diphosphate: step 7/9. In Methanococcoides burtonii (strain DSM 6242 / NBRC 107633 / OCM 468 / ACE-M), this protein is Histidinol-phosphate aminotransferase.